Here is an 881-residue protein sequence, read N- to C-terminus: Envelope glycoprotein gp160 (881 aa).

The first 19 residues, 1-19 (MGCLGNQLLIAILLLSVYG), serve as a signal peptide directing secretion. The Extracellular segment spans residues 20-696 (IYCTQYVTVF…ASWIKYIQYG (677 aa)). Asn37 carries an N-linked (GlcNAc...) asparagine; by host glycan. A disulfide bridge connects residues Cys44 and Cys57. N-linked (GlcNAc...) asparagine; by host glycans are attached at residues Asn70, Asn114, Asn148, Asn158, Asn186, Asn200, Asn204, Asn214, Asn246, Asn249, Asn280, Asn286, Asn297, Asn308, Asn318, Asn373, and Asn379. Disulfide bonds link Cys101-Cys222, Cys108-Cys213, Cys113-Cys170, Cys235-Cys265, and Cys245-Cys257. Residues 113 to 169 (CNKSETDRWGLTKSSTTITTAAPTSAPVSEKIDMVNETSSCIAQNNCTGLEQEQMIS) are V1. The tract at residues 170–213 (CKFTMTGLKRDKTKEYNETWYSTDLVCEQGNSTDNESRCYMNHC) is V2. The V3 stretch occupies residues 313–345 (CRRPGNKTVLPVTIMSGLVFHSQPLTDRPKQAW). Residues Cys313 and Cys346 are joined by a disulfide bond. Disulfide bonds link Cys397/Cys461 and Cys404/Cys434. The tract at residues 404–434 (CKMNWFLNWVEDRDVTTQRPKERHRRNYVPC) is V4. N-linked (GlcNAc...) asparagine; by host glycosylation is found at Asn462 and Asn478. Positions 477–484 (GNQTSITM) are V5. The interval 528–548 (GVFVLGFLGFLATAGSAMGAA) is fusion peptide. The immunosuppression stretch occupies residues 591 to 607 (LQTRVTAIEKYLEDQAQ). Residues Asn627, Asn636, and Asn652 are each glycosylated (N-linked (GlcNAc...) asparagine; by host). Residues 636-668 (NDTWQEWERKVDFLEENITALLEEAQIQQEKNM) are a coiled coil. Residues 673-694 (KLNSWDVFGNWFDLASWIKYIQ) are MPER; binding to GalCer. A helical membrane pass occupies residues 697–717 (IYVVVGVILLRIVIYIVQMLA). Residues 718 to 881 (KLRQGYRPVF…IRQGLELTLL (164 aa)) lie on the Cytoplasmic side of the membrane. The YXXV motif; contains endocytosis signal motif lies at 723–726 (YRPV). A disordered region spans residues 737-761 (THTQQDPALPTREGKEGDGGEGGGN). Cys789 carries the S-palmitoyl cysteine; by host lipid modification. Positions 880 to 881 (LL) match the Di-leucine internalization motif motif.

As to quaternary structure, the mature envelope protein (Env) consists of a homotrimer of non-covalently associated gp120-gp41 heterodimers. The resulting complex protrudes from the virus surface as a spike. Interacts with host CD4 and CCR5. Gp120 also interacts with the C-type lectins CD209/DC-SIGN and CLEC4M/DC-SIGNR (collectively referred to as DC-SIGN(R)). In terms of assembly, the mature envelope protein (Env) consists of a homotrimer of non-covalently associated gp120-gp41 heterodimers. The resulting complex protrudes from the virus surface as a spike. In terms of processing, specific enzymatic cleavages in vivo yield mature proteins. Envelope glycoproteins are synthesized as an inactive precursor that is heavily N-glycosylated and processed likely by host cell furin in the Golgi to yield the mature SU and TM proteins. The cleavage site between SU and TM requires the minimal sequence [KR]-X-[KR]-R. Palmitoylation of the transmembrane protein and of Env polyprotein (prior to its proteolytic cleavage) is essential for their association with host cell membrane lipid rafts. Palmitoylation is therefore required for envelope trafficking to classical lipid rafts, but not for viral replication.

Its subcellular location is the virion membrane. It localises to the host cell membrane. It is found in the host endosome membrane. In terms of biological role, the surface protein gp120 (SU) attaches the virus to the host lymphoid cell by binding to the primary receptor CD4. This interaction induces a structural rearrangement creating a high affinity binding site for a chemokine coreceptor like CCR5. This peculiar 2 stage receptor-interaction strategy allows gp120 to maintain the highly conserved coreceptor-binding site in a cryptic conformation, protected from neutralizing antibodies. These changes are transmitted to the transmembrane protein gp41 and are thought to activate its fusogenic potential by unmasking its fusion peptide. Functionally, surface protein gp120 (SU) may target the virus to gut-associated lymphoid tissue (GALT) by binding host ITGA4/ITGB7 (alpha-4/beta-7 integrins), a complex that mediates T-cell migration to the GALT. Interaction between gp120 and ITGA4/ITGB7 would allow the virus to enter GALT early in the infection, infecting and killing most of GALT's resting CD4+ T-cells. This T-cell depletion is believed to be the major insult to the host immune system leading to AIDS. The surface protein gp120 is a ligand for CD209/DC-SIGN and CLEC4M/DC-SIGNR, which are respectively found on dendritic cells (DCs), and on endothelial cells of liver sinusoids and lymph node sinuses. These interactions allow capture of viral particles at mucosal surfaces by these cells and subsequent transmission to permissive cells. DCs are professional antigen presenting cells, critical for host immunity by inducing specific immune responses against a broad variety of pathogens. They act as sentinels in various tissues where they take up antigen, process it, and present it to T-cells following migration to lymphoid organs. SIV subverts the migration properties of dendritic cells to gain access to CD4+ T-cells in lymph nodes. Virus transmission to permissive T-cells occurs either in trans (without DCs infection, through viral capture and transmission), or in cis (following DCs productive infection, through the usual CD4-gp120 interaction), thereby inducing a robust infection. In trans infection, bound virions remain infectious over days and it is proposed that they are not degraded, but protected in non-lysosomal acidic organelles within the DCs close to the cell membrane thus contributing to the viral infectious potential during DCs' migration from the periphery to the lymphoid tissues. On arrival at lymphoid tissues, intact virions recycle back to DCs' cell surface allowing virus transmission to CD4+ T-cells. Virion capture also seems to lead to MHC-II-restricted viral antigen presentation, and probably to the activation of SIV-specific CD4+ cells. Its function is as follows. The transmembrane protein gp41 (TM) acts as a class I viral fusion protein. Under the current model, the protein has at least 3 conformational states: pre-fusion native state, pre-hairpin intermediate state, and post-fusion hairpin state. During fusion of viral and target intracellular membranes, the coiled coil regions (heptad repeats) assume a trimer-of-hairpins structure, positioning the fusion peptide in close proximity to the C-terminal region of the ectodomain. The formation of this structure appears to drive apposition and subsequent fusion of viral and target cell membranes. Complete fusion occurs in host cell endosomes. The virus undergoes clathrin-dependent internalization long before endosomal fusion, thus minimizing the surface exposure of conserved viral epitopes during fusion and reducing the efficacy of inhibitors targeting these epitopes. Membranes fusion leads to delivery of the nucleocapsid into the cytoplasm. In terms of biological role, the envelope glycoprotein gp160 precursor down-modulates cell surface CD4 antigen by interacting with it in the endoplasmic reticulum and blocking its transport to the cell surface. Functionally, the gp120-gp41 heterodimer allows rapid transcytosis of the virus through CD4 negative cells such as simple epithelial monolayers of the intestinal, rectal and endocervical epithelial barriers. Both gp120 and gp41 specifically recognize glycosphingolipids galactosyl-ceramide (GalCer) or 3' sulfo-galactosyl-ceramide (GalS) present in the lipid rafts structures of epithelial cells. Binding to these alternative receptors allows the rapid transcytosis of the virus through the epithelial cells. This transcytotic vesicle-mediated transport of virions from the apical side to the basolateral side of the epithelial cells does not involve infection of the cells themselves. The protein is Envelope glycoprotein gp160 (env) of Simian immunodeficiency virus (isolate K6W) (SIV-mac).